Here is a 530-residue protein sequence, read N- to C-terminus: Arginine--tRNA ligase (530 aa).

Positions 113 to 123 match the 'HIGH' region motif; the sequence is ANPTGPLHIGH.

The protein belongs to the class-I aminoacyl-tRNA synthetase family. As to quaternary structure, monomer.

The protein resides in the cytoplasm. It catalyses the reaction tRNA(Arg) + L-arginine + ATP = L-arginyl-tRNA(Arg) + AMP + diphosphate. The polypeptide is Arginine--tRNA ligase (Campylobacter jejuni subsp. jejuni serotype O:6 (strain 81116 / NCTC 11828)).